A 962-amino-acid chain; its full sequence is METLRIMSGKIVIKGAREHNLQNVDLELPRDKFIVITGISGSGKSSLAFDTIYAEGQRRYVESLSAYARQFLGQMKKPEMDYIEGLSPAISIDQKTTRVNPRSTVGTITEIYDYLRLLFARIGKPHCYLCGREIEQQTSTQIVDRIMDDGEGERIIILAPVVRDRKGEHQRVFERLREQGFVRVRVDGEIHDLEDEFDLDRNRKHSIDVVVDRLVVRRDTEFRKRLADSVETALQLGEGTVRVPSTMTPGEERIYSEHFACPGTAGINFEEISPRMFSFNSPHGACPECNGLGSKLEIDPDLVVPYPERSINEGAIVPWSKSGKRDNYYHQMLRAVAEHYGFSLDTPFRDLDEEHRRAILYGTDEKIQFVFQRKNRTYRVNRRFEGVIPRMERIYMETKSNYMRTYIGRFMSNHACPVCGGSRLRPESLSVTINGRSIHDVVEMSIREAHEFFDSLKLTEREEYIAREVLKEIRERLRFLIDVGLDYLTLSRSSGTLSGGEAQRIRLATQIGSGLVGVLYILDEPSIGLHQRDNRRLIETLKRLRDLGNTLIVVEHDEETILSADHVVDIGPGAGEHGGCVVAEGTPEEIMEDPDSLTGAYLSGRETIPLPEVRRRPSGRYLTVRGAAENNLREIDVRIPLGLFTCVTGVSGSGKSTLVNDILYRGVYERLNHKHMNAGRHTDIEGLQHIDKVVMIDQSPIGRTPRSNPATYTGVFTHIRELFAQTPEARKRGYRPGRFSFNVKGGRCEACGGDGIIKIEMHFLADVYVPCEVCRGRRYNEETLEIRYRGRNIAEVLDMTVEEALEFFENIPQVRRKLQTLYDVGLGYIKLGQPATTLSGGEAQRVKLAKELSRRSTGSTLYILDEPTTGLHFDDIKKLLNVLGRLVDAGNTAVVIEHNLDVIKSADHIIDLGPEGGERGGLVVAEGTPEEVAASGTHTGRFLREVLADERSQKVPVGQDTG.

38-45 (GISGSGKS) is a binding site for ATP. 2 ABC transporter domains span residues 319–597 (WSKS…PDSL) and 617–944 (PSGR…RFLR). Residue 649-656 (GVSGSGKS) participates in ATP binding. A C4-type zinc finger spans residues 748 to 774 (CEACGGDGIIKIEMHFLADVYVPCEVC).

This sequence belongs to the ABC transporter superfamily. UvrA family. As to quaternary structure, forms a heterotetramer with UvrB during the search for lesions.

Its subcellular location is the cytoplasm. In terms of biological role, the UvrABC repair system catalyzes the recognition and processing of DNA lesions. UvrA is an ATPase and a DNA-binding protein. A damage recognition complex composed of 2 UvrA and 2 UvrB subunits scans DNA for abnormalities. When the presence of a lesion has been verified by UvrB, the UvrA molecules dissociate. The chain is UvrABC system protein A from Methanothermobacter thermautotrophicus (strain ATCC 29096 / DSM 1053 / JCM 10044 / NBRC 100330 / Delta H) (Methanobacterium thermoautotrophicum).